A 194-amino-acid polypeptide reads, in one-letter code: Leucyl/phenylalanyl-tRNA--protein transferase (194 aa).

Belongs to the L/F-transferase family.

The protein resides in the cytoplasm. The enzyme catalyses N-terminal L-lysyl-[protein] + L-leucyl-tRNA(Leu) = N-terminal L-leucyl-L-lysyl-[protein] + tRNA(Leu) + H(+). It catalyses the reaction N-terminal L-arginyl-[protein] + L-leucyl-tRNA(Leu) = N-terminal L-leucyl-L-arginyl-[protein] + tRNA(Leu) + H(+). The catalysed reaction is L-phenylalanyl-tRNA(Phe) + an N-terminal L-alpha-aminoacyl-[protein] = an N-terminal L-phenylalanyl-L-alpha-aminoacyl-[protein] + tRNA(Phe). Functionally, functions in the N-end rule pathway of protein degradation where it conjugates Leu, Phe and, less efficiently, Met from aminoacyl-tRNAs to the N-termini of proteins containing an N-terminal arginine or lysine. The chain is Leucyl/phenylalanyl-tRNA--protein transferase from Chlorobium phaeobacteroides (strain DSM 266 / SMG 266 / 2430).